The primary structure comprises 290 residues: Agglutinin-2 (290 aa).

Residues 1–35 (MAISNTNLLQTKKPISLPLLAFITLFLMLLNRVNS) form the signal peptide. The N-linked (GlcNAc...) asparagine glycan is linked to asparagine 155. Mn(2+) is bound by residues glutamate 165 and aspartate 167. 3 residues coordinate Ca(2+): aspartate 167, asparagine 171, and aspartate 175. Positions 175 and 180 each coordinate Mn(2+). Asparagine 200 is a glycosylation site (N-linked (GlcNAc...) asparagine).

The protein belongs to the leguminous lectin family. In terms of assembly, homotetramer.

Its function is as follows. Mannose/glucose binding bark lectin. Bark lectins are storage proteins that probably maintain stocks of nitrogen during dormant period. Self-aggregatable molecules that can bind their own carbohydrate side chains. They could also play a role in the plant's defense against phytophagous invertebrates or herbivorous higher animals. This is Agglutinin-2 from Cladrastis kentukea (Yellow wood).